Here is an 84-residue protein sequence, read N- to C-terminus: Small ribosomal subunit protein bS16 (84 aa).

Belongs to the bacterial ribosomal protein bS16 family.

This is Small ribosomal subunit protein bS16 from Dichelobacter nodosus (strain VCS1703A).